An 83-amino-acid chain; its full sequence is MREGKRKNMSNKKVLTGIVVDAKCDKTIKVMVSRMIMHKTYKKIVKKRKNYVVHDEHNQYKCGDVVKIQEHIPISATKRWIVI.

This sequence belongs to the universal ribosomal protein uS17 family. In terms of assembly, part of the 30S ribosomal subunit.

One of the primary rRNA binding proteins, it binds specifically to the 5'-end of 16S ribosomal RNA. The chain is Small ribosomal subunit protein uS17 from Ehrlichia chaffeensis (strain ATCC CRL-10679 / Arkansas).